A 1542-amino-acid chain; its full sequence is ABC multidrug transporter AFR1 (1542 aa).

Disordered regions lie at residues 1 to 84 and 118 to 141; these read MSAA…LPAD and SQQS…FSRK. The segment covering 18-41 has biased composition (polar residues); sequence TATTQNPSGLANSQVTSDPVPSAT. Over residues 60–69 the composition is skewed to basic and acidic residues; it reads DKSVDAEKVE. Asn-207 and Asn-397 each carry an N-linked (GlcNAc...) asparagine glycan. One can recognise an ABC transporter 1 domain in the interval 221–473; sequence LKVLGIFGVN…MIGLGYRDLP (253 aa). 5 helical membrane-spanning segments follow: residues 584 to 604, 618 to 638, 669 to 689, 694 to 714, and 726 to 746; these read FGIS…GSVY, GGLL…ELPS, VPYN…MGGL, GAFF…SAFF, and VAAR…GYMI. Asn-822 carries N-linked (GlcNAc...) asparagine glycosylation. A helical membrane pass occupies residues 844–864; that stretch reads FGILVGFFAFFMFLQMMFIEY. Residues 917 to 1159 enclose the ABC transporter 2 domain; it reads FTWEGLNYTV…VLIDYLERNG (243 aa). An N-linked (GlcNAc...) asparagine glycan is attached at Asn-923. Residue 953 to 960 coordinates ATP; the sequence is GASGAGKT. A run of 6 helical transmembrane segments spans residues 1253–1273, 1284–1304, 1335–1355, 1365–1385, 1390–1410, and 1516–1536; these read WTRL…FLQL, VFAI…IEPQ, MPYS…GVGF, FFLM…AVAA, ILIA…FCGV, and FGIF…AARF.

The protein belongs to the ABC transporter superfamily. ABCG family. PDR (TC 3.A.1.205) subfamily.

It localises to the cell membrane. It carries out the reaction itraconazole(in) + ATP + H2O = itraconazole(out) + ADP + phosphate + H(+). The catalysed reaction is voriconazole(in) + ATP + H2O = voriconazole(out) + ADP + phosphate + H(+). The enzyme catalyses fluconazole(in) + ATP + H2O = fluconazole(out) + ADP + phosphate + H(+). In terms of biological role, major pleiotropic ABC efflux transporter that confers resistance to structurally and functionally unrelated compounds including azoles such as fluconazole (FLC), itraconazole (ITC), posaconazole (POS), and voriconazole (VRC). Is also able to efflux the eukaryote protein synthesis inhibitor cycloheximide (CHX). The chain is ABC multidrug transporter AFR1 from Cryptococcus deuterogattii (strain R265) (Cryptococcus gattii VGII (strain R265)).